Consider the following 503-residue polypeptide: Sodium/hydrogen exchanger 3 (503 aa).

Residues 1 to 22 are Cytoplasmic-facing; it reads MVIGLSTMLEKTEALFASDHAS. A helical membrane pass occupies residues 23–43; it reads VVSMNLFVALLCACIVLGHLL. At 44–51 the chain is on the vacuolar side; the sequence is EETRWMNE. Asn50 is a glycosylation site (N-linked (GlcNAc...) asparagine). Residues 52–72 form a helical membrane-spanning segment; that stretch reads SITALIIGSCTGIVILLISGG. The Cytoplasmic portion of the chain corresponds to 73 to 76; the sequence is KSSR. The segment at residues 77–97 is an intramembrane region (helical); that stretch reads ILVFSEDLFFIYLLPPIIFNA. Topologically, residues 98-109 are cytoplasmic; that stretch reads GFQVKKKQFFRN. A helical membrane pass occupies residues 110–130; it reads FMTIMLFGAIGTLISFVIISF. The Vacuolar portion of the chain corresponds to 131-138; sequence GAKHLFEK. A helical membrane pass occupies residues 139-159; sequence MNIGDLTIADYLAIGAIFSAT. The Cytoplasmic portion of the chain corresponds to 160–174; that stretch reads DSVCTLQVLNQDETP. The chain crosses the membrane as a helical span at residues 175-195; sequence LLYSLVFGEGVVNDATSVVLF. Over 196 to 219 the chain is Vacuolar; that stretch reads NAIQRFDLTNINSAIALEFAGNFF. A helical membrane pass occupies residues 220 to 240; the sequence is YLFILSTALGVAAGLLSAFVI. The Cytoplasmic portion of the chain corresponds to 241–265; sequence KKLYIGRHSTDREVALMMLLAYLSY. A helical membrane pass occupies residues 266–286; that stretch reads MLAELFHLSSILTVFFCGIVM. Residues 287–305 lie on the Vacuolar side of the membrane; it reads SHYTWHNVTDKSKVTTKHT. N-linked (GlcNAc...) asparagine glycosylation occurs at Asn293. Residues 306-326 traverse the membrane as a helical segment; the sequence is FAAMSFLAEIFIFLYVGMDAL. Topologically, residues 327 to 345 are cytoplasmic; it reads DIEKWDVVRNSPGQSIGVS. A helical transmembrane segment spans residues 346–366; the sequence is SILLGLILLGRAAFVFPLSFL. Over 367-383 the chain is Vacuolar; it reads SNLTKSSPDEKIDLKKQ. An N-linked (GlcNAc...) asparagine glycan is attached at Asn368. A helical transmembrane segment spans residues 384 to 406; sequence VTIWWAGLMRGAVSMALAYNQFT. The Cytoplasmic portion of the chain corresponds to 407–416; sequence TSGHTKVLGN. Residues 417–437 traverse the membrane as a helical segment; the sequence is AIMITSTITVVLFSTVVFGLL. Residues 438 to 503 are Vacuolar-facing; sequence TKPLVKHLQP…FWKSPSRFTH (66 aa).

It belongs to the monovalent cation:proton antiporter 1 (CPA1) transporter (TC 2.A.36) family. As to expression, expressed in roots.

It localises to the vacuole membrane. It catalyses the reaction Na(+)(in) + H(+)(out) = Na(+)(out) + H(+)(in). The enzyme catalyses K(+)(in) + H(+)(out) = K(+)(out) + H(+)(in). Its function is as follows. May act in low affinity electroneutral exchange of protons for cations such as Na(+) or K(+) across membranes. May also exchange Li(+) and Cs(+) with a lower affinity. The protein is Sodium/hydrogen exchanger 3 (NHX3) of Arabidopsis thaliana (Mouse-ear cress).